The following is a 214-amino-acid chain: Transcriptional activator protein ExaE (214 aa).

The 117-residue stretch at 2–118 (GILLVDDHPM…VVLEAVRRVL (117 aa)) folds into the Response regulatory domain. Asp-53 is subject to 4-aspartylphosphate. Positions 143–208 (GNARLQGLTQ…ELVHLAIEAG (66 aa)) constitute an HTH luxR-type domain. A DNA-binding region (H-T-H motif) is located at residues 167–186 (TRLIAQQLCISAKTVSNYLT).

Positive regulator of the expression of the gene qedA and the activity of ADH I but does not affect the activities of ADH IIB or ADH IIG. The sequence is that of Transcriptional activator protein ExaE from Pseudomonas putida (Arthrobacter siderocapsulatus).